Here is a 170-residue protein sequence, read N- to C-terminus: Peptide deformylase (170 aa).

Fe cation is bound by residues Cys91 and His133. Residue Glu134 is part of the active site. His137 is a Fe cation binding site.

Belongs to the polypeptide deformylase family. Fe(2+) serves as cofactor.

It catalyses the reaction N-terminal N-formyl-L-methionyl-[peptide] + H2O = N-terminal L-methionyl-[peptide] + formate. Its function is as follows. Removes the formyl group from the N-terminal Met of newly synthesized proteins. Requires at least a dipeptide for an efficient rate of reaction. N-terminal L-methionine is a prerequisite for activity but the enzyme has broad specificity at other positions. The chain is Peptide deformylase from Glaesserella parasuis serovar 5 (strain SH0165) (Haemophilus parasuis).